We begin with the raw amino-acid sequence, 338 residues long: D-erythrose-4-phosphate dehydrogenase (338 aa).

Residue 12-13 (RI) coordinates NAD(+). Residues 154–156 (SCT), arginine 200, 213–214 (TK), and arginine 236 contribute to the substrate site. Residue cysteine 155 is the Nucleophile of the active site. Residue asparagine 318 coordinates NAD(+).

The protein belongs to the glyceraldehyde-3-phosphate dehydrogenase family. Epd subfamily. As to quaternary structure, homotetramer.

Its subcellular location is the cytoplasm. It carries out the reaction D-erythrose 4-phosphate + NAD(+) + H2O = 4-phospho-D-erythronate + NADH + 2 H(+). It functions in the pathway cofactor biosynthesis; pyridoxine 5'-phosphate biosynthesis; pyridoxine 5'-phosphate from D-erythrose 4-phosphate: step 1/5. Its function is as follows. Catalyzes the NAD-dependent conversion of D-erythrose 4-phosphate to 4-phosphoerythronate. This is D-erythrose-4-phosphate dehydrogenase from Pectobacterium carotovorum subsp. carotovorum (strain PC1).